Here is an 829-residue protein sequence, read N- to C-terminus: Coenzyme PQQ synthesis protein F (829 aa).

A Zn(2+)-binding site is contributed by His-62. Glu-65 functions as the Proton acceptor in the catalytic mechanism. Zn(2+) contacts are provided by His-66 and Glu-143.

Belongs to the peptidase M16 family. Zn(2+) serves as cofactor.

It participates in cofactor biosynthesis; pyrroloquinoline quinone biosynthesis. Required for coenzyme pyrroloquinoline quinone (PQQ) biosynthesis. It is thought that this protein is a protease that cleaves peptides bond in a small peptide (gene pqqA), providing the glutamate and tyrosine residues which are necessary for the synthesis of PQQ. The sequence is that of Coenzyme PQQ synthesis protein F (pqqF) from Pseudomonas protegens (strain DSM 19095 / LMG 27888 / CFBP 6595 / CHA0).